The sequence spans 352 residues: Photosystem II D2 protein (352 aa).

The chain crosses the membrane as a helical span at residues 40-60; the sequence is CAYLALGGWLTGTTFVTSWYT. H117 provides a ligand contact to chlorophyll a. The helical transmembrane segment at 124-140 threads the bilayer; the sequence is GFMLRQFEIAQSVRLRP. Pheophytin a is bound by residues Q129 and N142. A helical membrane pass occupies residues 152-165; that stretch reads VFVSVFLIYPLGQS. H197 contacts chlorophyll a. Residues 207-227 form a helical membrane-spanning segment; that stretch reads AALLCAIHGATVENTLFEDGD. H214 and F261 together coordinate a plastoquinone. Residue H214 coordinates Fe cation. H268 is a Fe cation binding site. Residues 278 to 294 form a helical membrane-spanning segment; sequence GLWMSALGVVGLALNLR.

Belongs to the reaction center PufL/M/PsbA/D family. As to quaternary structure, PSII is composed of 1 copy each of membrane proteins PsbA, PsbB, PsbC, PsbD, PsbE, PsbF, PsbH, PsbI, PsbJ, PsbK, PsbL, PsbM, PsbT, PsbY, PsbZ, Psb30/Ycf12, at least 3 peripheral proteins of the oxygen-evolving complex and a large number of cofactors. It forms dimeric complexes. The D1/D2 heterodimer binds P680, chlorophylls that are the primary electron donor of PSII, and subsequent electron acceptors. It shares a non-heme iron and each subunit binds pheophytin, quinone, additional chlorophylls, carotenoids and lipids. There is also a Cl(-1) ion associated with D1 and D2, which is required for oxygen evolution. The PSII complex binds additional chlorophylls, carotenoids and specific lipids. serves as cofactor.

The protein localises to the plastid. Its subcellular location is the chloroplast thylakoid membrane. It catalyses the reaction 2 a plastoquinone + 4 hnu + 2 H2O = 2 a plastoquinol + O2. Photosystem II (PSII) is a light-driven water:plastoquinone oxidoreductase that uses light energy to abstract electrons from H(2)O, generating O(2) and a proton gradient subsequently used for ATP formation. It consists of a core antenna complex that captures photons, and an electron transfer chain that converts photonic excitation into a charge separation. The D1/D2 (PsbA/PsbD) reaction center heterodimer binds P680, the primary electron donor of PSII as well as several subsequent electron acceptors. D2 is needed for assembly of a stable PSII complex. The protein is Photosystem II D2 protein of Bigelowiella natans (Pedinomonas minutissima).